Reading from the N-terminus, the 371-residue chain is MKAPSWRRAVLKVGSALIAPDETGVSTKYLLPIARFINECRERGQEVVLVSSGSVAAGRKHFNFEHKKVPVAVRKAMSAVGQNEMMGYWSRFFDSPCAQLLMTHSDLRDRARYVSIKNTLNRLLEHDILPVVNENDALATDEMKVGDNDNLSAMIATLVDADALFICSDIDGLYDSDPNLNPDAKKIPVVEQIDESIYSLAGGSVSSVGTGGMRTKVEAAEKATSHGIDTYIVNGRKGETFESLLQGDIPGTLFRRQSDPISNKKHWLRHTLVAQGEILVDEGAEKALIENGASLLSSGIVDVQGDFDRGDAVLVRSANDTDAIAKGICQYSAHELMHIKGQQTEDIAEKFGYSPITEVIHRDDLMILEDS.

Lys12 is an ATP binding site. Substrate is bound by residues Ser52, Asp136, and Asn148. ATP is bound by residues 168 to 169 (SD) and 210 to 216 (TGGMRTK). Positions 275–354 (QGEILVDEGA…EDIAEKFGYS (80 aa)) constitute a PUA domain.

This sequence belongs to the glutamate 5-kinase family.

It localises to the cytoplasm. The enzyme catalyses L-glutamate + ATP = L-glutamyl 5-phosphate + ADP. The protein operates within amino-acid biosynthesis; L-proline biosynthesis; L-glutamate 5-semialdehyde from L-glutamate: step 1/2. Catalyzes the transfer of a phosphate group to glutamate to form L-glutamate 5-phosphate. This chain is Glutamate 5-kinase, found in Idiomarina loihiensis (strain ATCC BAA-735 / DSM 15497 / L2-TR).